The chain runs to 508 residues: Phenylalanine--tRNA ligase alpha subunit (508 aa).

Ala2 carries the N-acetylalanine modification. Position 190 is a phosphothreonine (Thr190). Phosphoserine occurs at positions 193 and 301. Lys311 carries the post-translational modification N6-acetyllysine. L-phenylalanine contacts are provided by residues Thr329, 372-374, and Tyr412; that span reads QIE. Residue Glu414 participates in Mg(2+) binding. Residue Phe438 coordinates L-phenylalanine.

Belongs to the class-II aminoacyl-tRNA synthetase family. Phe-tRNA synthetase alpha subunit type 2 subfamily. In terms of assembly, heterotetramer; dimer of two heterodimers formed by FARSA and FARSB.

It is found in the cytoplasm. The catalysed reaction is tRNA(Phe) + L-phenylalanine + ATP = L-phenylalanyl-tRNA(Phe) + AMP + diphosphate + H(+). This is Phenylalanine--tRNA ligase alpha subunit (FARSA) from Homo sapiens (Human).